The chain runs to 309 residues: MNQPSSLAADLRGAWHAQAQSHPLITLGLAASAAGVVLLLVAGIVNALTGENRVHVGYAVLGGAAGFAATALGALMALGLRAISARTQDAMLGFAAGMMLAASAFSLILPGLDAAGTIVGPGPAAAAVVALGLGLGVLLMLGLDYFTPHEHERTGHQGPEAARVNRVWLFVLTIILHNLPEGMAIGVSFATGDLRIGLPLTSAIAIQDVPEGLAVALALRAVGLPIGRAVLVAVASGLMEPLGALVGVGISSGFALAYPISMGLAAGAMIFVVSHEVIPETHRNGHETTATVGLMAGFALMMFLDTALG.

At 1-22 the chain is on the periplasmic side; the sequence is MNQPSSLAADLRGAWHAQAQSH. The chain crosses the membrane as a helical span at residues 23-50; that stretch reads PLITLGLAASAAGVVLLLVAGIVNALTG. The Extracellular segment spans residues 51–55; the sequence is ENRVH. The helical transmembrane segment at 56–81 threads the bilayer; it reads VGYAVLGGAAGFAATALGALMALGLR. At 82 to 83 the chain is on the periplasmic side; it reads AI. Residues 84-119 traverse the membrane as a helical segment; sequence SARTQDAMLGFAAGMMLAASAFSLILPGLDAAGTIV. Zn(2+) is bound at residue D89. M99 contacts Cd(2+). Residues 120–121 are Extracellular-facing; it reads GP. A helical membrane pass occupies residues 122–145; it reads GPAAAAVVALGLGLGVLLMLGLDY. D144 lines the Zn(2+) pocket. D144 is a binding site for Cd(2+). The Periplasmic segment spans residues 146-165; that stretch reads FTPHEHERTGHQGPEAARVN. Residues 166-190 form a helical membrane-spanning segment; the sequence is RVWLFVLTIILHNLPEGMAIGVSFA. A Zn(2+)-binding site is contributed by H177. H177, N178, and E181 together coordinate Cd(2+). Zn(2+) is bound at residue E181. The Extracellular portion of the chain corresponds to 191–192; that stretch reads TG. A helical membrane pass occupies residues 193-222; the sequence is DLRIGLPLTSAIAIQDVPEGLAVALALRAV. Residue Q207 coordinates Zn(2+). Residues Q207, D208, and E211 each contribute to the Cd(2+) site. Zn(2+) is bound at residue E211. Topologically, residues 223–224 are periplasmic; that stretch reads GL. A helical transmembrane segment spans residues 225 to 251; the sequence is PIGRAVLVAVASGLMEPLGALVGVGIS. E240 is a Cd(2+) binding site. The Extracellular portion of the chain corresponds to 252-255; sequence SGFA. A helical transmembrane segment spans residues 256–275; the sequence is LAYPISMGLAAGAMIFVVSH. Residues H275, E276, and H286 each coordinate Zn(2+). H275 contacts Cd(2+). The Periplasmic portion of the chain corresponds to 276–287; that stretch reads EVIPETHRNGHE. A helical membrane pass occupies residues 288–308; it reads TTATVGLMAGFALMMFLDTAL. G309 is a topological domain (extracellular).

The protein belongs to the ZIP transporter (TC 2.A.5) family. In terms of assembly, homodimer. Also exists as a monomer.

It is found in the cell inner membrane. It catalyses the reaction Zn(2+)(in) = Zn(2+)(out). The enzyme catalyses Cd(2+)(in) = Cd(2+)(out). Functionally, selective electrodiffusional channel that mediates the uptake of Zn(2+). Exploits in vivo zinc concentration gradients (maintained by cellular zinc homeostasis) to passively move zinc ions into the cytoplasm. ZIPB-mediated zinc flux is dependent upon pH, but independent of the proton motive force. Is also able to import Cd(2+), but is not permeable to Co(2+), Cu(2+), Fe(2+), Mn(2+) and Ni(2+). This is Zinc transporter ZIPB from Bordetella bronchiseptica (strain ATCC BAA-588 / NCTC 13252 / RB50) (Alcaligenes bronchisepticus).